Here is a 196-residue protein sequence, read N- to C-terminus: Hypoxanthine/guanine phosphoribosyltransferase (196 aa).

Belongs to the purine/pyrimidine phosphoribosyltransferase family. Archaeal HPRT subfamily. In terms of assembly, homodimer.

It localises to the cytoplasm. The enzyme catalyses IMP + diphosphate = hypoxanthine + 5-phospho-alpha-D-ribose 1-diphosphate. It carries out the reaction GMP + diphosphate = guanine + 5-phospho-alpha-D-ribose 1-diphosphate. The protein operates within purine metabolism; IMP biosynthesis via salvage pathway; IMP from hypoxanthine: step 1/1. Functionally, catalyzes a salvage reaction resulting in the formation of IMP that is energically less costly than de novo synthesis. The protein is Hypoxanthine/guanine phosphoribosyltransferase of Methanocaldococcus sp. (strain FS406-22).